The following is a 264-amino-acid chain: Polyneuridine aldehyde esterase (264 aa).

A propeptide spanning residues 1 to 6 is cleaved from the precursor; it reads MHSAAN. The region spanning 12 to 122 is the AB hydrolase-1 domain; that stretch reads HFVLVHGGCL…MMPDPNHSLT (111 aa). Active-site residues include Ser87, Asp216, and His244. Ser87 is a binding site for 16-epivellosimine.

The protein belongs to the AB hydrolase superfamily. In terms of assembly, homodimer; homodimerizes in aqueous solutions at pH 7.0. In terms of tissue distribution, mainly expressed in roots and, to a lower level, in leaves.

The enzyme catalyses polyneuridine aldehyde + H2O = 16-epivellosimine + methanol + CO2. Its pathway is alkaloid biosynthesis; ajmaline biosynthesis. Inhibited by DEPC and HgCl(2). Its function is as follows. Hydrolase involved in the biosynthesis of ajmaline-type monoterpenoid indole alkaloids (MIAs) natural products, important plant-derived pharmaceuticals used in the therapy of heart disorders. Catalyzes the hydrolysis of polyneuridine aldehyde into epi-vellosimine, precursor of vomilenine, an intermediate chemical in the biosynthesis of ajmaline. The polypeptide is Polyneuridine aldehyde esterase (Rauvolfia serpentina (Serpentine wood)).